The chain runs to 319 residues: ATP-dependent 6-phosphofructokinase (319 aa).

G11 contributes to the ATP binding site. 21 to 25 (RAVVR) contacts ADP. Residues 72-73 (RS) and 102-105 (GDGS) contribute to the ATP site. D103 is a Mg(2+) binding site. Substrate is bound at residue 125–127 (TID). D127 (proton acceptor) is an active-site residue. R154 contributes to the ADP binding site. Substrate contacts are provided by residues R162 and 169–171 (MGR). ADP contacts are provided by residues 185-187 (GAE) and 213-215 (KMH). Substrate is bound by residues E222, R243, and 249–252 (HIQR).

It belongs to the phosphofructokinase type A (PFKA) family. ATP-dependent PFK group I subfamily. Prokaryotic clade 'B1' sub-subfamily. Homotetramer. It depends on Mg(2+) as a cofactor.

It localises to the cytoplasm. The enzyme catalyses beta-D-fructose 6-phosphate + ATP = beta-D-fructose 1,6-bisphosphate + ADP + H(+). The protein operates within carbohydrate degradation; glycolysis; D-glyceraldehyde 3-phosphate and glycerone phosphate from D-glucose: step 3/4. Its activity is regulated as follows. Allosterically activated by ADP and other diphosphonucleosides, and allosterically inhibited by phosphoenolpyruvate. Its function is as follows. Catalyzes the phosphorylation of D-fructose 6-phosphate to fructose 1,6-bisphosphate by ATP, the first committing step of glycolysis. The chain is ATP-dependent 6-phosphofructokinase from Clostridium tetani (strain Massachusetts / E88).